The chain runs to 384 residues: MKKLTILGSTGSIGTSTLEIVAAHPDRFQVIALTAGSNLELLKQQVEVFRPRLVSVLTADLARQLDRMLSDPKPEIHHGIPGLIAAATAGEADVVVAAIVGAAGLVPTAAAIKAGKDVALANKETLVTAGRIMMDLVRENGVRLYPVDSEHSAVFQSLEGQSGKDVKRIILTASGGPFLNLPLDRLSRVSVADALNHPNWSMGQKITIDSATMMNKGLEVIEARWLFDTPAERIAVNIHPQSIIHSMVEYVDGCVMAQLGVPDMKAPIAYALTYPERIPTGVKPLDLTALSGLTFLAPDYQRFPALKLAYDALAAGESMPAVMNAANEVAVEAFLKGKIGFTGIATSIARTMDAHEPHTLATIEDVLSSDLWAREKSRELIGLS.

Thr-10, Gly-11, Ser-12, Ile-13, Gly-36, Asn-38, and Asn-122 together coordinate NADPH. Lys-123 provides a ligand contact to 1-deoxy-D-xylulose 5-phosphate. Residue Glu-124 coordinates NADPH. Residue Asp-148 coordinates Mn(2+). Residues Ser-149, Glu-150, Ser-174, and His-197 each coordinate 1-deoxy-D-xylulose 5-phosphate. Glu-150 provides a ligand contact to Mn(2+). Residue Gly-203 participates in NADPH binding. 1-deoxy-D-xylulose 5-phosphate-binding residues include Ser-210, Asn-215, Lys-216, and Glu-219. Glu-219 lines the Mn(2+) pocket.

Belongs to the DXR family. Mg(2+) serves as cofactor. Mn(2+) is required as a cofactor.

The enzyme catalyses 2-C-methyl-D-erythritol 4-phosphate + NADP(+) = 1-deoxy-D-xylulose 5-phosphate + NADPH + H(+). It functions in the pathway isoprenoid biosynthesis; isopentenyl diphosphate biosynthesis via DXP pathway; isopentenyl diphosphate from 1-deoxy-D-xylulose 5-phosphate: step 1/6. In terms of biological role, catalyzes the NADPH-dependent rearrangement and reduction of 1-deoxy-D-xylulose-5-phosphate (DXP) to 2-C-methyl-D-erythritol 4-phosphate (MEP). This chain is 1-deoxy-D-xylulose 5-phosphate reductoisomerase, found in Geobacter metallireducens (strain ATCC 53774 / DSM 7210 / GS-15).